A 243-amino-acid chain; its full sequence is 1-(5-phosphoribosyl)-5-[(5-phosphoribosylamino)methylideneamino] imidazole-4-carboxamide isomerase (243 aa).

The Proton acceptor role is filled by Asp14. The Proton donor role is filled by Asp135.

It belongs to the HisA/HisF family.

It is found in the cytoplasm. It catalyses the reaction 1-(5-phospho-beta-D-ribosyl)-5-[(5-phospho-beta-D-ribosylamino)methylideneamino]imidazole-4-carboxamide = 5-[(5-phospho-1-deoxy-D-ribulos-1-ylimino)methylamino]-1-(5-phospho-beta-D-ribosyl)imidazole-4-carboxamide. Its pathway is amino-acid biosynthesis; L-histidine biosynthesis; L-histidine from 5-phospho-alpha-D-ribose 1-diphosphate: step 4/9. The protein is 1-(5-phosphoribosyl)-5-[(5-phosphoribosylamino)methylideneamino] imidazole-4-carboxamide isomerase of Rubrobacter xylanophilus (strain DSM 9941 / JCM 11954 / NBRC 16129 / PRD-1).